The following is a 101-amino-acid chain: NADH-quinone oxidoreductase subunit K (101 aa).

Transmembrane regions (helical) follow at residues 4 to 24 (LGHL…GIFL), 30 to 50 (IVLL…FIAF), and 62 to 82 (FVFF…AILV).

It belongs to the complex I subunit 4L family. NDH-1 is composed of 14 different subunits. Subunits NuoA, H, J, K, L, M, N constitute the membrane sector of the complex.

It localises to the cell inner membrane. The catalysed reaction is a quinone + NADH + 5 H(+)(in) = a quinol + NAD(+) + 4 H(+)(out). In terms of biological role, NDH-1 shuttles electrons from NADH, via FMN and iron-sulfur (Fe-S) centers, to quinones in the respiratory chain. The immediate electron acceptor for the enzyme in this species is believed to be ubiquinone. Couples the redox reaction to proton translocation (for every two electrons transferred, four hydrogen ions are translocated across the cytoplasmic membrane), and thus conserves the redox energy in a proton gradient. The sequence is that of NADH-quinone oxidoreductase subunit K from Xylella fastidiosa (strain Temecula1 / ATCC 700964).